An 81-amino-acid polypeptide reads, in one-letter code: Cytotoxin 3 (81 aa).

Positions 1–21 are cleaved as a signal peptide; sequence MKTLLLTLVVVTIVCLDLGYT. 4 disulfides stabilise this stretch: cysteine 24-cysteine 42, cysteine 35-cysteine 59, cysteine 63-cysteine 74, and cysteine 75-cysteine 80.

Belongs to the three-finger toxin family. Short-chain subfamily. Type IA cytotoxin sub-subfamily. Monomer in solution; Homodimer and oligomer in the presence of negatively charged lipids forming a pore with a size ranging between 20 and 30 Angstroms. Interacts with Kv channel-interacting protein 1 (KCNIP1) in a calcium-independent manner. As to expression, expressed by the venom gland.

The protein localises to the secreted. The protein resides in the target cell membrane. Basic protein that binds to cell membrane and depolarizes cardiomyocytes. This cytotoxin also possesses lytic activity on many other cells, including red blood cells. Interaction with sulfatides in the cell membrane induces pore formation and cell internalization. Cytotoxicity is due to pore formation, and to another mechanism independent of membrane-damaging activity. When internalized, it targets the mitochondrial membrane and induces mitochondrial swelling and fragmentation. It inhibits protein kinases C. It binds to the integrin alpha-V/beta-3 (ITGAV/ITGB3) with a moderate affinity. It also binds with high affinity to heparin. This chain is Cytotoxin 3, found in Naja atra (Chinese cobra).